Here is a 443-residue protein sequence, read N- to C-terminus: Cobyrinate a,c-diamide synthase (443 aa).

The GATase cobBQ-type domain occupies 244-435; that stretch reads KVSVAMDSAF…AHIHFLSNPR (192 aa). Cysteine 327 acts as the Nucleophile in catalysis.

Belongs to the CobB/CbiA family. It depends on Mg(2+) as a cofactor.

It carries out the reaction cob(II)yrinate + 2 L-glutamine + 2 ATP + 2 H2O = cob(II)yrinate a,c diamide + 2 L-glutamate + 2 ADP + 2 phosphate + 2 H(+). It functions in the pathway cofactor biosynthesis; adenosylcobalamin biosynthesis; cob(II)yrinate a,c-diamide from sirohydrochlorin (anaerobic route): step 10/10. Catalyzes the ATP-dependent amidation of the two carboxylate groups at positions a and c of cobyrinate, using either L-glutamine or ammonia as the nitrogen source. In Thermoplasma acidophilum (strain ATCC 25905 / DSM 1728 / JCM 9062 / NBRC 15155 / AMRC-C165), this protein is Cobyrinate a,c-diamide synthase.